Here is a 58-residue protein sequence, read N- to C-terminus: MSILSSITSIINMKQNNTSNKQLISNSNFPQQKQQSNNLISANLGEKYTKCKYCHRIL.

This is an uncharacterized protein from Dictyostelium discoideum (Social amoeba).